A 313-amino-acid polypeptide reads, in one-letter code: Protein-methionine-sulfoxide reductase catalytic subunit MsrP (313 aa).

Residues 1-44 constitute a signal peptide (tat-type signal); the sequence is MARWRPDMAEREATPEALYLRRREFLALGAAGAVGLLVARGARA. Mo-molybdopterin contacts are provided by residues asparagine 76, 79-80, cysteine 134, threonine 169, asparagine 217, arginine 222, and 233-235; these read YE and GAK.

The protein belongs to the MsrP family. Heterodimer of a catalytic subunit (MsrP) and a heme-binding subunit (MsrQ). It depends on Mo-molybdopterin as a cofactor. Post-translationally, predicted to be exported by the Tat system. The position of the signal peptide cleavage has not been experimentally proven.

Its subcellular location is the periplasm. The enzyme catalyses L-methionyl-[protein] + a quinone + H2O = L-methionyl-(S)-S-oxide-[protein] + a quinol. The catalysed reaction is L-methionyl-[protein] + a quinone + H2O = L-methionyl-(R)-S-oxide-[protein] + a quinol. Part of the MsrPQ system that repairs oxidized periplasmic proteins containing methionine sulfoxide residues (Met-O), using respiratory chain electrons. Thus protects these proteins from oxidative-stress damage caused by reactive species of oxygen and chlorine generated by the host defense mechanisms. MsrPQ is essential for the maintenance of envelope integrity under bleach stress, rescuing a wide series of structurally unrelated periplasmic proteins from methionine oxidation. The catalytic subunit MsrP is non-stereospecific, being able to reduce both (R-) and (S-) diastereoisomers of methionine sulfoxide. The protein is Protein-methionine-sulfoxide reductase catalytic subunit MsrP of Anaeromyxobacter sp. (strain K).